The primary structure comprises 716 residues: MMSIRQRREIRATEVSEDFPAQEENVKLENKLPSGCTSRRLWKILSLTIGGTIALCIGLLTSVYLATLHENDLWFSNIKEVEREISFRTECGLYYSYYKQMLQAPTLVQGFHGLIYDNKTESMKTINLLQRMNIYQEVFLSILYRVLPIQKYLEPVYFYIYTLFGLQAIYVTALYITSWLLSGTWLSGLLAAFWYVTNRIDTTRVEFTIPLRENWALPFFAIQIAAITYFLRPNLQPLSERLTLLAIFISTFLFSLTWQFNQFMMLMQALVLFTLDSLDMLPAVKATWLYGIQITSLLLVCILQFFNSMILGSLLISFNLSVFIARKLQKNLKTGSFLNRLGKLLLHLFMVLCLTLFLNNIIKKILNLKSDEHIFKFLKAKFGLGATRDFDANLYLCEEAFGLLPFNTFGRLSDTLLFYAYIFVLSITVIVAFVVAFHNLSDSTNQQSVGKMEKGTVDLKPETAYNLIHTILFGFLALSTMRMKYLWTSHMCVFASFGLCSPEIWELLLKSVHLYNPKRICIMRYSVPILILLYLCYKFWPGMMDELSELREFYDPDTVELMNWINSNTPRKAVFAGSMQLLAGVKLCTGRTLTNHPHYEDSSLRERTRAVYQIYAKRAPEEVHALLRSFGTDYVILEDSICYERRHRRGCRLRDLLDIANGHMMDGPGENDPDLKPADHPRFCEEIKRNLPPYVAYFTRVFQNKTFHVYKLSRNK.

Residues 1–43 lie on the Cytoplasmic side of the membrane; the sequence is MMSIRQRREIRATEVSEDFPAQEENVKLENKLPSGCTSRRLWK. A helical membrane pass occupies residues 44-64; the sequence is ILSLTIGGTIALCIGLLTSVY. At 65-154 the chain is on the lumenal side; the sequence is LATLHENDLW…RVLPIQKYLE (90 aa). N-linked (GlcNAc...) asparagine glycosylation is present at asparagine 118. A helical transmembrane segment spans residues 155-182; it reads PVYFYIYTLFGLQAIYVTALYITSWLLS. Topologically, residues 183 to 184 are cytoplasmic; sequence GT. The name=3 intramembrane region spans 185–197; the sequence is WLSGLLAAFWYVT. Over 198 to 215 the chain is Cytoplasmic; sequence NRIDTTRVEFTIPLRENW. Residues 216-230 constitute an intramembrane region (name=4); it reads ALPFFAIQIAAITYF. Over 231-239 the chain is Cytoplasmic; it reads LRPNLQPLS. A helical membrane pass occupies residues 240-256; sequence ERLTLLAIFISTFLFSL. The Lumenal portion of the chain corresponds to 257–262; it reads TWQFNQ. A helical membrane pass occupies residues 263-279; the sequence is FMMLMQALVLFTLDSLD. At 280-289 the chain is on the cytoplasmic side; the sequence is MLPAVKATWL. A helical transmembrane segment spans residues 290-306; it reads YGIQITSLLLVCILQFF. Topologically, residues 307–308 are lumenal; that stretch reads NS. A helical transmembrane segment spans residues 309–323; the sequence is MILGSLLISFNLSVF. The Cytoplasmic portion of the chain corresponds to 324–338; that stretch reads IARKLQKNLKTGSFL. The helical transmembrane segment at 339 to 359 threads the bilayer; the sequence is NRLGKLLLHLFMVLCLTLFLN. The Lumenal portion of the chain corresponds to 360–414; it reads NIIKKILNLKSDEHIFKFLKAKFGLGATRDFDANLYLCEEAFGLLPFNTFGRLSD. The helical transmembrane segment at 415 to 437 threads the bilayer; it reads TLLFYAYIFVLSITVIVAFVVAF. The Cytoplasmic portion of the chain corresponds to 438–465; that stretch reads HNLSDSTNQQSVGKMEKGTVDLKPETAY. A helical transmembrane segment spans residues 466–485; the sequence is NLIHTILFGFLALSTMRMKY. Residues 486–487 are Lumenal-facing; the sequence is LW. Residues 488-499 form a helical membrane-spanning segment; the sequence is TSHMCVFASFGL. The Cytoplasmic portion of the chain corresponds to 500 to 522; it reads CSPEIWELLLKSVHLYNPKRICI. A helical membrane pass occupies residues 523 to 539; that stretch reads MRYSVPILILLYLCYKF. The Lumenal segment spans residues 540–716; that stretch reads WPGMMDELSE…FHVYKLSRNK (177 aa). Asparagine 704 carries N-linked (GlcNAc...) asparagine glycosylation.

Belongs to the dpy-19 family. In terms of tissue distribution, widely expressed.

It is found in the endoplasmic reticulum membrane. The catalysed reaction is L-tryptophyl-[protein] + a di-trans,poly-cis-dolichyl beta-D-mannosyl phosphate = C-alpha-D-mannosyl-L-tryptophyl-[protein] + a di-trans,poly-cis-dolichyl phosphate + H(+). The protein operates within protein modification; protein glycosylation. C-mannosyltransferase that mediates C-mannosylation of tryptophan residues on target proteins. The reaction occurs on the luminal side of the endoplasmic reticulum and involves the transfer of a mannose unit from a dolichylphosphate mannose (Dol-P-Man) donor to an acceptor protein containing a WxxW or WxxC consensus sequence. C-mannosylates RSPO1, a Wnt signaling regulator, preferentially at the first Trp residue in the sequence WxxW. C-mannosylates the netrin receptor UNC5A, preferentially at the third tryptophan of WxxWxxWxxC sequence. Its function is as follows. Has no C-mannosyltransferase activity. The polypeptide is Protein C-mannosyl-transferase DPY19L3 (DPY19L3) (Homo sapiens (Human)).